A 227-amino-acid chain; its full sequence is ATP-dependent dethiobiotin synthetase BioD (227 aa).

13–18 is a binding site for ATP; it reads DVGKTV. T17 provides a ligand contact to Mg(2+). Residue K38 is part of the active site. Residues D55, 116–119, 176–177, and 205–207 each bind ATP; these read EGAG, NR, and PYI. Mg(2+) contacts are provided by D55 and E116.

The protein belongs to the dethiobiotin synthetase family. As to quaternary structure, homodimer. Mg(2+) serves as cofactor.

The protein localises to the cytoplasm. It catalyses the reaction (7R,8S)-7,8-diammoniononanoate + CO2 + ATP = (4R,5S)-dethiobiotin + ADP + phosphate + 3 H(+). It functions in the pathway cofactor biosynthesis; biotin biosynthesis; biotin from 7,8-diaminononanoate: step 1/2. Its function is as follows. Catalyzes a mechanistically unusual reaction, the ATP-dependent insertion of CO2 between the N7 and N8 nitrogen atoms of 7,8-diaminopelargonic acid (DAPA, also called 7,8-diammoniononanoate) to form a ureido ring. This Vibrio vulnificus (strain CMCP6) protein is ATP-dependent dethiobiotin synthetase BioD.